Here is a 196-residue protein sequence, read N- to C-terminus: Transcriptional regulatory protein UhpA (196 aa).

A Response regulatory domain is found at threonine 3–alanine 116. The residue at position 54 (aspartate 54) is a 4-aspartylphosphate. The HTH luxR-type domain occupies alanine 131 to tryptophan 196. Residues valine 155–alanine 174 constitute a DNA-binding region (H-T-H motif).

Post-translationally, phosphorylated and dephosphorylated by UhpB.

It localises to the cytoplasm. Its activity is regulated as follows. Phosphorylation by UhpB enhances DNA binding activity. Part of the UhpABC signaling cascade that controls the expression of the hexose phosphate transporter UhpT. Activates the transcription of the uhpT gene. Acts by binding specifically to the uhpT promoter region. This Escherichia coli (strain K12) protein is Transcriptional regulatory protein UhpA (uhpA).